Here is a 471-residue protein sequence, read N- to C-terminus: Glutamate--tRNA ligase (471 aa).

The 'HIGH' region motif lies at 9–19 (PSPTGYLHVGG). Positions 98, 100, 125, and 127 each coordinate Zn(2+). Positions 237–241 (KLSKR) match the 'KMSKS' region motif. Residue Lys-240 participates in ATP binding.

Belongs to the class-I aminoacyl-tRNA synthetase family. Glutamate--tRNA ligase type 1 subfamily. As to quaternary structure, monomer. Zn(2+) serves as cofactor.

It is found in the cytoplasm. The enzyme catalyses tRNA(Glu) + L-glutamate + ATP = L-glutamyl-tRNA(Glu) + AMP + diphosphate. Its function is as follows. Catalyzes the attachment of glutamate to tRNA(Glu) in a two-step reaction: glutamate is first activated by ATP to form Glu-AMP and then transferred to the acceptor end of tRNA(Glu). This Yersinia pseudotuberculosis serotype O:1b (strain IP 31758) protein is Glutamate--tRNA ligase.